Consider the following 245-residue polypeptide: Fibroblast growth factor 13 (245 aa).

Disordered regions lie at residues 1–37 (MAAA…SKGN) and 213–245 (TEFS…NDST). The tract at residues 1 to 62 (MAAAIASSLI…GSKKRRRRRP (62 aa)) is mediates targeting to the nucleus. Residues 215-245 (FSRSGSGTPTKSRSVSGVLNGGKSMSQNDST) show a composition bias toward polar residues.

It belongs to the heparin-binding growth factors family.

It localises to the cell projection. It is found in the filopodium. Its subcellular location is the growth cone. The protein localises to the dendrite. The protein resides in the cell membrane. It localises to the sarcolemma. It is found in the cytoplasm. Its function is as follows. Microtubule-binding protein which directly binds tubulin and is involved in both polymerization and stabilization of microtubules. Through its action on microtubules, may participate in the refinement of axons by negatively regulating axonal and leading processes branching. Plays a crucial role in neuron polarization and migration. Regulates voltage-gated sodium channel transport and function. Required for proper head development, it is involved in neural differentiation through regulation of the mek5-erk5 pathway. The polypeptide is Fibroblast growth factor 13 (fgf13) (Xenopus laevis (African clawed frog)).